The chain runs to 203 residues: GTP-binding protein YPTC1 (203 aa).

GTP is bound by residues 15–23 (GDSGVGKSC), 33–40 (YTESYIST), 63–67 (DTAGQ), 121–124 (NKSD), and 151–153 (SAK). Residues 37 to 45 (YISTIGVDF) carry the Effector region motif. Residues 174–203 (ASQPIPTKAGGPVVRPQEGKPINSKSSSCC) form a disordered region. 2 S-geranylgeranyl cysteine lipidation sites follow: cysteine 202 and cysteine 203.

Belongs to the small GTPase superfamily. Rab family.

The protein localises to the cell membrane. Its function is as follows. Protein transport. Probably involved in vesicular traffic. In Chlamydomonas reinhardtii (Chlamydomonas smithii), this protein is GTP-binding protein YPTC1 (YPTC1).